A 513-amino-acid polypeptide reads, in one-letter code: MSPAAPVTESSAAEVHREQTDAPREPQRPLKQSLSKSLCRESHWKCLLLSLLMYCCVIAMTWCQVTKVTRLSFDSTFKVKSMIYHDSPCSNGYIYIPVAFLVMLYVVYLVECWQCYSRNELQFKVDLESVTERVQRMQQATPCIWWKAISYHYIRRTRQVTRYRNGDAYTSTQVYHERVNTHVAEAEFDYGNCGVKDIPKHLAGSDGFPVTKLRFTKCFSFANVESENSYLTQRARFFTENEGLDDYMEAREGMHLKNVEFKEYMVAFADPNRLPWYASTCSFWLAAAFTLSWPLRVLTEYRTAYLHYHVEKLFGFDYVSVTPLDHERPFCRHIPRVNTIDSTELEWHIRSNQQLVPSYSEAVLMNLTQQSSCNTFSARGIGAAGGNGFGGYRQNCERCHRSISSSSIFSRSALSICNSSNPRLAFSSSRFSLGRLYGSRRSCLWQSRSSSLNDPGCPTESTRCLANEESPPSPPAYQDALYFPVLIIHRNEGCIAHDHHSLHRNGSCVETSL.

The tract at residues 1–29 (MSPAAPVTESSAAEVHREQTDAPREPQRP) is disordered. Residues 14-28 (EVHREQTDAPREPQR) show a composition bias toward basic and acidic residues. Helical transmembrane passes span 46 to 66 (CLLL…CQVT), 93 to 113 (YIYI…VECW), and 274 to 294 (LPWY…LSWP). N-linked (GlcNAc...) asparagine glycosylation is found at N366, N418, and N505.

It belongs to the TMEM151 family.

It is found in the membrane. This chain is Transmembrane protein 151B (tmem151b), found in Danio rerio (Zebrafish).